We begin with the raw amino-acid sequence, 251 residues long: 1-(5-phosphoribosyl)-5-[(5-phosphoribosylamino)methylideneamino] imidazole-4-carboxamide isomerase (251 aa).

Asp7 acts as the Proton acceptor in catalysis. Asp131 serves as the catalytic Proton donor.

Belongs to the HisA/HisF family.

It localises to the cytoplasm. The enzyme catalyses 1-(5-phospho-beta-D-ribosyl)-5-[(5-phospho-beta-D-ribosylamino)methylideneamino]imidazole-4-carboxamide = 5-[(5-phospho-1-deoxy-D-ribulos-1-ylimino)methylamino]-1-(5-phospho-beta-D-ribosyl)imidazole-4-carboxamide. It participates in amino-acid biosynthesis; L-histidine biosynthesis; L-histidine from 5-phospho-alpha-D-ribose 1-diphosphate: step 4/9. The sequence is that of 1-(5-phosphoribosyl)-5-[(5-phosphoribosylamino)methylideneamino] imidazole-4-carboxamide isomerase from Blochmanniella floridana.